The chain runs to 224 residues: UPF0758 protein Neut_0782 (224 aa).

An MPN domain is found at isoleucine 102–isoleucine 224. Histidine 173, histidine 175, and aspartate 186 together coordinate Zn(2+). Positions histidine 173–aspartate 186 match the JAMM motif motif.

The protein belongs to the UPF0758 family.

In Nitrosomonas eutropha (strain DSM 101675 / C91 / Nm57), this protein is UPF0758 protein Neut_0782.